The chain runs to 293 residues: Cytidine deaminase 6 (293 aa).

CMP/dCMP-type deaminase domains lie at 16 to 147 (RGPS…FGPD) and 178 to 293 (EDCS…TNKN). 57 to 59 (NVE) is a binding site for substrate. Residue histidine 70 participates in Zn(2+) binding. The active-site Proton donor is glutamate 72. Zn(2+)-binding residues include cysteine 103 and cysteine 106.

This sequence belongs to the cytidine and deoxycytidylate deaminase family. As to quaternary structure, homodimer. Requires Zn(2+) as cofactor.

The enzyme catalyses cytidine + H2O + H(+) = uridine + NH4(+). The catalysed reaction is 2'-deoxycytidine + H2O + H(+) = 2'-deoxyuridine + NH4(+). This enzyme scavenges exogenous and endogenous cytidine and 2'-deoxycytidine for UMP synthesis. This is Cytidine deaminase 6 (CDA6) from Arabidopsis thaliana (Mouse-ear cress).